Here is a 92-residue protein sequence, read N- to C-terminus: Non-specific lipid-transfer protein 2 (92 aa).

4 disulfides stabilise this stretch: C4–C52, C14–C28, C29–C74, and C50–C88.

It belongs to the plant LTP family. In terms of tissue distribution, expressed in seeds and, at very low levels, in pulp of fruit (at protein level).

In terms of biological role, plant non-specific lipid-transfer proteins transfer phospholipids as well as galactolipids across membranes. May play a role in wax or cutin deposition in the cell walls of expanding epidermal cells and certain secretory tissues. The polypeptide is Non-specific lipid-transfer protein 2 (Actinidia deliciosa (Kiwi)).